A 7785-amino-acid chain; its full sequence is Probable non-canonical nonribosomal peptide synthetase (NRPS) CymA (7785 aa).

Carrier domains are found at residues 487–562 (TARS…QRQE), 1908–1983 (HART…SEQQ), and 2958–3033 (SPGM…LEGG). O-(pantetheine 4'-phosphoryl)serine occurs at positions 522, 1943, and 2993. One copy of the LRR 1 repeat lies at 3088 to 3111 (RLALADVVVRHEALRTVFAERAGN). Carrier domains are found at residues 3978–4053 (APRT…SEQQ), 5002–5077 (EPRT…LEAN), and 6389–6464 (GPRD…AQGS). Residues Ser4013, Ser5037, and Ser6424 each carry the O-(pantetheine 4'-phosphoryl)serine modification. An LRR 2 repeat occupies 6853–6875 (TGVSRVDLSVNAIETFDDHGLPA). Residues 7432–7507 (GPRTPQEEIL…QLAEQLGSDG (76 aa)) enclose the Carrier 7 domain. An O-(pantetheine 4'-phosphoryl)serine modification is found at Ser7467.

The cofactor is pantetheine 4'-phosphate.

Its function is as follows. Probable non-canonical nonribosomal peptide synthetase (NRPS); part of the gene cluster that mediates the biosynthesis of cyclic heptapeptides, known as cyclomarins and also of cyclic dipeptides, called cyclomarazines, which have both antimicrobial and cytotoxic effects. First, CymD catalyzes the reverse N-prenylation of monomeric L-tryptophan with dimethylallyl diphosphate (DMAPP) to form N-(1,1-dimethylallyl)-tryptophan (r-N-DMAT). The N-(1,1-dimethylallyl)-tryptophan produced by CymD is then combined with a range of standard and nonproteinogenic amino acid substrates to synthesize the peptides, a process that is probably catalyzed by the non-canonical nonribosomal peptide synthetase (NRPS), CymA. Other proteins in the cluster catalyze further modifications of the peptides including CymV which catalyzes the oxidation of olefinic cyclomarins and cyclomarazines to their respective epoxide derivatives. In Salinispora arenicola (strain CNS-205), this protein is Probable non-canonical nonribosomal peptide synthetase (NRPS) CymA.